Here is a 727-residue protein sequence, read N- to C-terminus: C-terminal-binding protein 1 (727 aa).

Residues cysteine 5 to histidine 60 form a THAP-type zinc finger. Residues glycine 64–glutamine 158 are disordered. Positions threonine 77–serine 94 are enriched in basic and acidic residues. NAD(+)-binding positions include tyrosine 251, leucine 331–valine 336, aspartate 355, cysteine 388–threonine 394, threonine 415–histidine 417, aspartate 441, and histidine 467–tryptophan 470. Over residues alanine 587 to serine 613 the composition is skewed to low complexity. 2 disordered regions span residues alanine 587 to alanine 629 and alanine 652 to asparagine 681.

Belongs to the D-isomer specific 2-hydroxyacid dehydrogenase family. In terms of assembly, homodimer.

Its function is as follows. Binds DNA and represses gene expression. Plays a role in regulation of life span, possibly by regulating transcription of genes important for lipid metabolism. The polypeptide is C-terminal-binding protein 1 (Caenorhabditis elegans).